Reading from the N-terminus, the 736-residue chain is Fidgetin (736 aa).

Disordered stretches follow at residues 118–155 (GMTP…CGNH), 180–248 (TYSG…YSPG), 272–295 (IPGY…GSSA), and 341–438 (STRG…AEEQ). A compositionally biased stretch (low complexity) spans 128–150 (VTASVGSSTGVASSLSEPSYSSS). A compositionally biased stretch (pro residues) spans 205-214 (QPPPPPPPTL). Over residues 216–232 (PSYNTSSPNLSSYNYPP) the composition is skewed to low complexity. Positions 352-368 (DTSSLAFKPTKQSMPTD) are enriched in polar residues. ATP is bound by residues Ala467 and 507 to 512 (GTGRTL).

Belongs to the AAA ATPase family.

Its subcellular location is the nucleus matrix. It localises to the cytoplasm. The protein localises to the cytoskeleton. The protein resides in the microtubule organizing center. It is found in the centrosome. ATP-dependent microtubule severing protein. Severs microtubules along their length and depolymerizes their ends, primarily the minus-end, suppressing microtubule growth from and attachment to centrosomes. Microtubule severing may promote rapid reorganization of cellular microtubule arrays and the release of microtubules from the centrosome following nucleation. Microtubule release from the mitotic spindle poles may allow depolymerization of the microtubule end proximal to the spindle pole, leading to poleward microtubule flux and poleward motion of chromosome. This chain is Fidgetin (fign), found in Danio rerio (Zebrafish).